Consider the following 227-residue polypeptide: Peroxisomal membrane protein 11B (227 aa).

Residues 1–85 are Cytoplasmic-facing; that stretch reads MSLDTVDKLV…RNPGATPMIR (85 aa). A helical membrane pass occupies residues 86–106; it reads FLAVLANSGEMVYFFFDHFLW. The Lumenal portion of the chain corresponds to 107–201; the sequence is LSRIGSIDAK…IALAEIHPNP (95 aa). A helical transmembrane segment spans residues 202–222; the sequence is FCNHTITLGISGLVSAWAGWY. Residues 223–227 lie on the Cytoplasmic side of the membrane; it reads RNWPS.

It belongs to the peroxin-11 family. As to quaternary structure, homooligomer. Interacts with ARC5 and FIS1B on peroxisomes. As to expression, expressed in roots, leaves and developing siliques.

Its subcellular location is the peroxisome membrane. Involved in peroxisomal proliferation. Promotes peroxisomal duplication, aggregation or elongation without fission. This is Peroxisomal membrane protein 11B (PEX11B) from Arabidopsis thaliana (Mouse-ear cress).